The chain runs to 212 residues: FMN-dependent NADH:quinone oxidoreductase (212 aa).

Residues S10, 16-18 (SFS), and 98-101 (MWNF) each bind FMN.

This sequence belongs to the azoreductase type 1 family. Homodimer. It depends on FMN as a cofactor.

It carries out the reaction 2 a quinone + NADH + H(+) = 2 a 1,4-benzosemiquinone + NAD(+). It catalyses the reaction N,N-dimethyl-1,4-phenylenediamine + anthranilate + 2 NAD(+) = 2-(4-dimethylaminophenyl)diazenylbenzoate + 2 NADH + 2 H(+). Quinone reductase that provides resistance to thiol-specific stress caused by electrophilic quinones. In terms of biological role, also exhibits azoreductase activity. Catalyzes the reductive cleavage of the azo bond in aromatic azo compounds to the corresponding amines. In Desulfotalea psychrophila (strain LSv54 / DSM 12343), this protein is FMN-dependent NADH:quinone oxidoreductase.